Here is a 351-residue protein sequence, read N- to C-terminus: Autoinducer 2 import system permease protein LsrC (351 aa).

9 helical membrane-spanning segments follow: residues 14–34, 39–59, 70–90, 93–113, 115–135, 155–175, 213–233, 252–272, and 284–304; these read LLAILTLFALLGIIDRNYFSL, MIFSSAQILILLAIGATLVML, ITGLCAVTVGMALNAGFGLVA, LFALLVGMVAGFFNGILVTWL, IPAIVATLGTLGLYRGLMLLL, ILFSISPIGWLTMLLILSMAW, MNGVMAALAGIVFASQIGFIP, GISLLGGTGTIIGAILGAFLL, and LPAWWNDFIAGLVLLGVLVFD.

Belongs to the binding-protein-dependent transport system permease family. AraH/RbsC subfamily. The complex is composed of two ATP-binding proteins (LsrA), two transmembrane proteins (LsrC and LsrD) and a solute-binding protein (LsrB).

It is found in the cell inner membrane. Functionally, part of the ABC transporter complex LsrABCD involved in autoinducer 2 (AI-2) import. Probably responsible for the translocation of the substrate across the membrane. This chain is Autoinducer 2 import system permease protein LsrC (lsrC), found in Yersinia pseudotuberculosis serotype IB (strain PB1/+).